The following is a 425-amino-acid chain: Histidine--tRNA ligase (425 aa).

Belongs to the class-II aminoacyl-tRNA synthetase family. In terms of assembly, homodimer.

It is found in the cytoplasm. It carries out the reaction tRNA(His) + L-histidine + ATP = L-histidyl-tRNA(His) + AMP + diphosphate + H(+). The sequence is that of Histidine--tRNA ligase from Streptomyces coelicolor (strain ATCC BAA-471 / A3(2) / M145).